Reading from the N-terminus, the 156-residue chain is Single-stranded DNA-binding protein 1 (156 aa).

Positions 1–107 (MNETMICAVG…IDAVAIGHDL (107 aa)) constitute an SSB domain. A compositionally biased stretch (low complexity) spans 114–124 (FRRTARTEAST). The segment at 114–156 (FRRTARTEASTSPPRPEPNWEVPAGGTPGEPVPEQRPDPVPVG) is disordered.

In terms of assembly, homotetramer.

The chain is Single-stranded DNA-binding protein 1 (ssb1) from Streptomyces coelicolor (strain ATCC BAA-471 / A3(2) / M145).